We begin with the raw amino-acid sequence, 696 residues long: Elongation factor G (696 aa).

The region spanning 8–290 (ERYRNIGIMA…AVLDYLPSPL (283 aa)) is the tr-type G domain. GTP-binding positions include 17-24 (AHIDAGKT), 88-92 (DTPGH), and 142-145 (NKMD).

The protein belongs to the TRAFAC class translation factor GTPase superfamily. Classic translation factor GTPase family. EF-G/EF-2 subfamily.

It is found in the cytoplasm. Catalyzes the GTP-dependent ribosomal translocation step during translation elongation. During this step, the ribosome changes from the pre-translocational (PRE) to the post-translocational (POST) state as the newly formed A-site-bound peptidyl-tRNA and P-site-bound deacylated tRNA move to the P and E sites, respectively. Catalyzes the coordinated movement of the two tRNA molecules, the mRNA and conformational changes in the ribosome. The protein is Elongation factor G of Nitrosomonas eutropha (strain DSM 101675 / C91 / Nm57).